A 349-amino-acid polypeptide reads, in one-letter code: Protein-glutamate methylesterase/protein-glutamine glutaminase (349 aa).

The region spanning Arg-5–Met-122 is the Response regulatory domain. Asp-56 carries the post-translational modification 4-aspartylphosphate. In terms of domain architecture, CheB-type methylesterase spans Leu-152 to Gly-344. Residues Ser-164, His-190, and Asp-286 contribute to the active site.

The protein belongs to the CheB family. Phosphorylated by CheA. Phosphorylation of the N-terminal regulatory domain activates the methylesterase activity.

Its subcellular location is the cytoplasm. It catalyses the reaction [protein]-L-glutamate 5-O-methyl ester + H2O = L-glutamyl-[protein] + methanol + H(+). It carries out the reaction L-glutaminyl-[protein] + H2O = L-glutamyl-[protein] + NH4(+). Involved in chemotaxis. Part of a chemotaxis signal transduction system that modulates chemotaxis in response to various stimuli. Catalyzes the demethylation of specific methylglutamate residues introduced into the chemoreceptors (methyl-accepting chemotaxis proteins or MCP) by CheR. Also mediates the irreversible deamidation of specific glutamine residues to glutamic acid. This is Protein-glutamate methylesterase/protein-glutamine glutaminase from Escherichia coli O6:K15:H31 (strain 536 / UPEC).